Reading from the N-terminus, the 274-residue chain is Diaminopimelate epimerase (274 aa).

The substrate site is built by Asn-11, Gln-44, and Asn-64. Cys-73 (proton donor) is an active-site residue. Substrate-binding positions include 74–75 (GN), Asn-157, Asn-190, and 208–209 (ER). Cys-217 functions as the Proton acceptor in the catalytic mechanism. Residue 218-219 (GS) coordinates substrate.

This sequence belongs to the diaminopimelate epimerase family. Homodimer.

Its subcellular location is the cytoplasm. The catalysed reaction is (2S,6S)-2,6-diaminopimelate = meso-2,6-diaminopimelate. Its pathway is amino-acid biosynthesis; L-lysine biosynthesis via DAP pathway; DL-2,6-diaminopimelate from LL-2,6-diaminopimelate: step 1/1. Catalyzes the stereoinversion of LL-2,6-diaminopimelate (L,L-DAP) to meso-diaminopimelate (meso-DAP), a precursor of L-lysine and an essential component of the bacterial peptidoglycan. This chain is Diaminopimelate epimerase, found in Escherichia coli O127:H6 (strain E2348/69 / EPEC).